The chain runs to 304 residues: Ubiquitin thioesterase OTU1 (304 aa).

The tract at residues 5 to 83 is UBX-like; that stretch reads RCKTREGTQL…IVEEDKSKLR (79 aa). In terms of domain architecture, OTU spans 105 to 230; that stretch reads IVRRVVPADN…GIHYDPLQRQ (126 aa). The segment at 110–116 is cys-loop; the sequence is VPADNSC. Residue Asp113 is part of the active site. Catalysis depends on Cys116, which acts as the Nucleophile. A variable-loop region spans residues 169-179; it reads IRREDTWGGAI. Residues 219 to 223 form a his-loop region; sequence YDGIH. Ile222 provides a ligand contact to substrate. Residue His223 is part of the active site. Residues 247–252 are S2 site; that stretch reads DEALVQ. A C2H2-type zinc finger spans residues 274–298; that stretch reads LRCMACQKGLTGQSAARDHAKETGH. Residue His298 is part of the active site.

The protein localises to the cytoplasm. The enzyme catalyses Thiol-dependent hydrolysis of ester, thioester, amide, peptide and isopeptide bonds formed by the C-terminal Gly of ubiquitin (a 76-residue protein attached to proteins as an intracellular targeting signal).. Hydrolase that can remove conjugated ubiquitin from proteins and participates in endoplasmic reticulum-associated degradation (ERAD) for misfolded lumenal proteins. May act by triming the ubiquitin chain on the associated substrate to facilitate their threading through the VCP/p97 pore. Ubiquitin moieties on substrates may present a steric impediment to the threading process when the substrate is transferred to the VCP pore and threaded through VCP's axial channel. Mediates deubiquitination of 'Lys-27'-, 'Lys-29'- and 'Lys-33'-linked polyubiquitin chains. Also able to hydrolyze 'Lys-11'-linked ubiquitin chains. Cleaves both polyubiquitin and di-ubiquitin. The protein is Ubiquitin thioesterase OTU1 (yod1) of Xenopus laevis (African clawed frog).